The following is a 346-amino-acid chain: Carbamoyl phosphate synthase small chain (346 aa).

The CPSase stretch occupies residues 1 to 160 (MEDGSVFAGR…SVKEPVLLGE (160 aa)). 3 residues coordinate L-glutamine: Ser39, Gly209, and Gly211. A Glutamine amidotransferase type-1 domain is found at 164 to 346 (CIGVVDCGVK…FLKLVERHGH (183 aa)). Cys237 functions as the Nucleophile in the catalytic mechanism. L-glutamine is bound by residues Leu238, Gln241, Asn280, Gly282, and Tyr283. Residues His320 and Glu322 contribute to the active site.

This sequence belongs to the CarA family. As to quaternary structure, composed of two chains; the small (or glutamine) chain promotes the hydrolysis of glutamine to ammonia, which is used by the large (or ammonia) chain to synthesize carbamoyl phosphate. Tetramer of heterodimers (alpha,beta)4.

The catalysed reaction is hydrogencarbonate + L-glutamine + 2 ATP + H2O = carbamoyl phosphate + L-glutamate + 2 ADP + phosphate + 2 H(+). It carries out the reaction L-glutamine + H2O = L-glutamate + NH4(+). Its pathway is amino-acid biosynthesis; L-arginine biosynthesis; carbamoyl phosphate from bicarbonate: step 1/1. It functions in the pathway pyrimidine metabolism; UMP biosynthesis via de novo pathway; (S)-dihydroorotate from bicarbonate: step 1/3. Small subunit of the glutamine-dependent carbamoyl phosphate synthetase (CPSase). CPSase catalyzes the formation of carbamoyl phosphate from the ammonia moiety of glutamine, carbonate, and phosphate donated by ATP, constituting the first step of 2 biosynthetic pathways, one leading to arginine and/or urea and the other to pyrimidine nucleotides. The small subunit (glutamine amidotransferase) binds and cleaves glutamine to supply the large subunit with the substrate ammonia. This Pyrobaculum aerophilum (strain ATCC 51768 / DSM 7523 / JCM 9630 / CIP 104966 / NBRC 100827 / IM2) protein is Carbamoyl phosphate synthase small chain.